Here is an 86-residue protein sequence, read N- to C-terminus: Cell division protein ZapA (86 aa).

This sequence belongs to the ZapA family. Type 2 subfamily. As to quaternary structure, homodimer. Interacts with FtsZ.

The protein localises to the cytoplasm. Activator of cell division through the inhibition of FtsZ GTPase activity, therefore promoting FtsZ assembly into bundles of protofilaments necessary for the formation of the division Z ring. It is recruited early at mid-cell but it is not essential for cell division. This chain is Cell division protein ZapA, found in Oceanobacillus iheyensis (strain DSM 14371 / CIP 107618 / JCM 11309 / KCTC 3954 / HTE831).